The primary structure comprises 290 residues: Potassium-transporting ATPase subunit beta (290 aa).

The Cytoplasmic segment spans residues 1–36; the sequence is MAALQEKKSCSQRMEEFQRYCWNPDTGQMLGRTLSR. A helical; Signal-anchor for type II membrane protein membrane pass occupies residues 37–57; that stretch reads WVWISLYYVAFYVVMTGIFAL. Topologically, residues 58–290 are extracellular; sequence CIYTLMCTLD…KVEFKLTIQQ (233 aa). Asn-99, Asn-103, Asn-130, Asn-146, and Asn-161 each carry an N-linked (GlcNAc...) asparagine glycan. Cys-131 and Cys-152 form a disulfide bridge. Cys-162 and Cys-178 are joined by a disulfide. N-linked (GlcNAc...) asparagine glycans are attached at residues Asn-193 and Asn-221. Residues 194–290 are immunoglobulin-like; it reads STAPRADCTF…KVEFKLTIQQ (97 aa). Residues Cys-201 and Cys-262 are joined by a disulfide bond.

Belongs to the X(+)/potassium ATPases subunit beta family. In terms of assembly, the ATPase pump is composed of two subunits: alpha (catalytic) and beta (regulatory). Interacts with alpha subunit ATP12A; this interaction is required for the formation of a functionally active pump and targeting at the plasma membrane. Interacts (via N-terminus) with alpha subunit ATP4A (via the P-domain). In terms of processing, N-glycosylation is necessary for assembly and functional expression of the pump at the plasma membrane.

The protein localises to the apical cell membrane. Its subcellular location is the cell membrane. Its function is as follows. The beta subunit of the gastric H(+)/K(+) ATPase pump which transports H(+) ions in exchange for K(+) ions across the apical membrane of parietal cells. Plays a structural and regulatory role in the assembly and membrane targeting of a functionally active pump. Within a transport cycle, the transfer of a H(+) ion across the membrane is coupled to ATP hydrolysis and is associated with a transient phosphorylation of the alpha subunit that shifts the pump conformation from inward-facing (E1) to outward-facing state (E2). Interacts with the phosphorylation domain of the alpha subunit and functions as a ratchet, stabilizing the lumenal-open E2 conformation and preventing the reverse reaction of the transport cycle. In Canis lupus familiaris (Dog), this protein is Potassium-transporting ATPase subunit beta (ATP4B).